The following is a 297-amino-acid chain: GTP cyclohydrolase FolE2 (297 aa).

Disordered regions lie at residues 1–21 and 180–207; these read MTHA…SERD and IRAE…RERP.

It belongs to the GTP cyclohydrolase IV family.

It catalyses the reaction GTP + H2O = 7,8-dihydroneopterin 3'-triphosphate + formate + H(+). Its pathway is cofactor biosynthesis; 7,8-dihydroneopterin triphosphate biosynthesis; 7,8-dihydroneopterin triphosphate from GTP: step 1/1. Functionally, converts GTP to 7,8-dihydroneopterin triphosphate. The polypeptide is GTP cyclohydrolase FolE2 (Methylibium petroleiphilum (strain ATCC BAA-1232 / LMG 22953 / PM1)).